A 258-amino-acid chain; its full sequence is Translocon-associated protein subunit alpha (258 aa).

Residues 1-24 form the signal peptide; that stretch reads MMNLRVLFLALLLLASPLLQVARC. The Lumenal segment spans residues 25–190; that stretch reads QSDAEDHSSL…ESGGLLSGES (166 aa). N-linked (GlcNAc...) asparagine glycosylation is found at asparagine 57, asparagine 119, and asparagine 127. Residues 191–209 form a helical membrane-spanning segment; that stretch reads VFLLTLGIGLLLLLGLWAY. Over 210–258 the chain is Cytoplasmic; that stretch reads SQVQRLTKKTKKVSKVEVGTRSTEASLDEWLEGTTLAKTSSGKTKNKKN.

This sequence belongs to the TRAP-alpha family. Heterotetramer of TRAP-alpha, TRAP-beta, TRAP-delta and TRAP-gamma. Post-translationally, phosphorylated in its cytoplasmic tail.

The protein resides in the endoplasmic reticulum membrane. Its function is as follows. TRAP proteins are part of a complex whose function is to bind calcium to the ER membrane and thereby regulate the retention of ER resident proteins. May be involved in the recycling of the translocation apparatus after completion of the translocation process or may function as a membrane-bound chaperone facilitating folding of translocated proteins. This chain is Translocon-associated protein subunit alpha, found in Arabidopsis thaliana (Mouse-ear cress).